The following is a 350-amino-acid chain: Vetispiradiene synthase 3 (350 aa).

5 residues coordinate Mg(2+): aspartate 103, aspartate 107, aspartate 246, threonine 250, and glutamate 254. Residues 103 to 107 (DDTFD) carry the DDXXD motif motif.

It belongs to the terpene synthase family. Tpsa subfamily. Mg(2+) serves as cofactor.

It localises to the cytoplasm. The catalysed reaction is (2E,6E)-farnesyl diphosphate = (-)-vetispiradiene + diphosphate. Its pathway is secondary metabolite biosynthesis; terpenoid biosynthesis. In terms of biological role, sesquiterpene synthase that catalyzes the formation of vetispiradiene from trans,trans-farnesyl diphosphate. The initial internal cyclization produces the monocyclic intermediate germacrene A. The sequence is that of Vetispiradiene synthase 3 from Hyoscyamus muticus (Egyptian henbane).